The primary structure comprises 446 residues: Sterile alpha motif domain-containing protein 7 (446 aa).

Residues 94–168 (HTARTEMEMY…NLQGNPMLAA (75 aa)) are required for localization to nuclear polycomb bodies. Disordered regions lie at residues 187–207 (NTGN…QAEE) and 225–277 (KDPD…AWDD). Over residues 232 to 249 (PSNQKSSETNEKPTTALA) the composition is skewed to polar residues. One can recognise an SAM domain in the interval 327 to 392 (WTVDDVHSFI…SQVSQHVGSM (66 aa)).

In terms of assembly, monomer, homodimer and homooligomer. Component of a Polycomb group (PcG) multiprotein PRC1-like complex. Interacts with PHC2, NR2E3 and SAMD11. Interacts with RNF1 in a PHC2-dependent manner. As to expression, expressed in the retina (at protein level). Expressed in the retinal inner and outer nuclear layers.

The protein localises to the nucleus. It is found in the cytoplasm. In terms of biological role, component of a Polycomb group (PcG) multiprotein PRC1-like complex, essential for establishing rod photoreceptor cell identity and function by silencing nonrod gene expression in developing rod photoreceptor cells. Via its association with the PRC1-like complex, promotes epigenetic repressive marks H3K27me3 and H2AK119ub marks in nonrod genes, silencing their transcription. Represses Crx-controlled photoreceptor-specific gene expression. This chain is Sterile alpha motif domain-containing protein 7 (SAMD7), found in Homo sapiens (Human).